Here is a 352-residue protein sequence, read N- to C-terminus: UDP-N-acetylglucosamine--N-acetylmuramyl-(pentapeptide) pyrophosphoryl-undecaprenol N-acetylglucosamine transferase (352 aa).

Residues Ser195 and Gln287 each coordinate UDP-N-acetyl-alpha-D-glucosamine.

This sequence belongs to the glycosyltransferase 28 family. MurG subfamily.

It localises to the cell membrane. It catalyses the reaction Mur2Ac(oyl-L-Ala-gamma-D-Glu-L-Lys-D-Ala-D-Ala)-di-trans,octa-cis-undecaprenyl diphosphate + UDP-N-acetyl-alpha-D-glucosamine = beta-D-GlcNAc-(1-&gt;4)-Mur2Ac(oyl-L-Ala-gamma-D-Glu-L-Lys-D-Ala-D-Ala)-di-trans,octa-cis-undecaprenyl diphosphate + UDP + H(+). It participates in cell wall biogenesis; peptidoglycan biosynthesis. In terms of biological role, cell wall formation. Catalyzes the transfer of a GlcNAc subunit on undecaprenyl-pyrophosphoryl-MurNAc-pentapeptide (lipid intermediate I) to form undecaprenyl-pyrophosphoryl-MurNAc-(pentapeptide)GlcNAc (lipid intermediate II). The protein is UDP-N-acetylglucosamine--N-acetylmuramyl-(pentapeptide) pyrophosphoryl-undecaprenol N-acetylglucosamine transferase of Streptococcus pneumoniae (strain 70585).